Here is a 144-residue protein sequence, read N- to C-terminus: Large ribosomal subunit protein uL15 (144 aa).

Residues 1 to 55 form a disordered region; it reads MQLNELKPVAGSRFKRLRKGRGLSSGHGFTSGRGTKGQKAHGKTRLGFEGGQMPL. The segment covering 23 to 35 has biased composition (gly residues); sequence LSSGHGFTSGRGT.

This sequence belongs to the universal ribosomal protein uL15 family. Part of the 50S ribosomal subunit.

In terms of biological role, binds to the 23S rRNA. In Limosilactobacillus fermentum (strain NBRC 3956 / LMG 18251) (Lactobacillus fermentum), this protein is Large ribosomal subunit protein uL15.